Consider the following 119-residue polypeptide: Protein TusC (119 aa).

It belongs to the DsrF/TusC family. In terms of assembly, heterohexamer, formed by a dimer of trimers. The hexameric TusBCD complex contains 2 copies each of TusB, TusC and TusD. The TusBCD complex interacts with TusE.

Its subcellular location is the cytoplasm. Part of a sulfur-relay system required for 2-thiolation of 5-methylaminomethyl-2-thiouridine (mnm(5)s(2)U) at tRNA wobble positions. This Escherichia coli O45:K1 (strain S88 / ExPEC) protein is Protein TusC.